The sequence spans 500 residues: MEAFNLHKKAVSRDYIVKPRLEYRTVSAVNGPLIILQNVKSPRFAEIVNVTLGDGSVRRGQVLEINQDKAVVQIFEGTTGIDNKKTVCQFTGEILKTPVSLDMLGRVFNGSGKPIDGGPPILPEAYLDIQGQPINPQSRTYPEEMFETGISSIDVMNSIARGQKIPLFSGAGLPHNEVAAQICRQVCLVSTCTLVKRSGKDEEDFAIVFAAMGVNMETARFFRQDFEENGAMERVTLFLNLANDPTIERIITPRLALTFAEYLAYEKGKHVLVILTDMSAYADALREVSAAREEVPGRRGYPGYMYTDLATIYERAGRVEGRPGSITQLPILTMPNDDITHPIPDLTGYITEEQIYLDRQLHNRQIYPPINVLPSLSRLMKSAIGEGMTRKDHSDVSNQLYAAYAMGKDALAMRAVVGVEALSQEDLLYLEFHDKFERRFVNQGAYERRDIYTSLDMAWDLLRIFPVQMLRRIPEKILQEYYHRTSNYEHKENKPHSSRS.

It belongs to the ATPase alpha/beta chains family. V-ATPase is a heteromultimeric enzyme composed of a peripheral catalytic V1 complex (main components: subunits A, B, C, D, E, and F) attached to an integral membrane V0 proton pore complex (main component: the proteolipid protein).

Non-catalytic subunit of the peripheral V1 complex of vacuolar ATPase. V-ATPase is responsible for acidifying a variety of intracellular compartments in eukaryotic cells. The sequence is that of V-type proton ATPase subunit B from Cyanidium caldarium (Red alga).